Here is a 436-residue protein sequence, read N- to C-terminus: Proline--tRNA ligase (436 aa).

This sequence belongs to the class-II aminoacyl-tRNA synthetase family. ProS type 2 subfamily. As to quaternary structure, homodimer.

The protein localises to the cytoplasm. The enzyme catalyses tRNA(Pro) + L-proline + ATP = L-prolyl-tRNA(Pro) + AMP + diphosphate. Its function is as follows. Catalyzes the attachment of proline to tRNA(Pro) in a two-step reaction: proline is first activated by ATP to form Pro-AMP and then transferred to the acceptor end of tRNA(Pro). This chain is Proline--tRNA ligase, found in Neorickettsia sennetsu (strain ATCC VR-367 / Miyayama) (Ehrlichia sennetsu).